The following is a 110-amino-acid chain: NADH-quinone oxidoreductase subunit K (110 aa).

Transmembrane regions (helical) follow at residues 13–33, 38–58, and 70–90; these read VTHGLIFSILLFVISVAGIII, ILILLMSIELMLLAVNTNFLI, and VFVFFIMAVAAAETAIGLAIV.

This sequence belongs to the complex I subunit 4L family. In terms of assembly, NDH-1 is composed of 14 different subunits. Subunits NuoA, H, J, K, L, M, N constitute the membrane sector of the complex.

The protein localises to the cell inner membrane. The enzyme catalyses a quinone + NADH + 5 H(+)(in) = a quinol + NAD(+) + 4 H(+)(out). In terms of biological role, NDH-1 shuttles electrons from NADH, via FMN and iron-sulfur (Fe-S) centers, to quinones in the respiratory chain. The immediate electron acceptor for the enzyme in this species is believed to be ubiquinone. Couples the redox reaction to proton translocation (for every two electrons transferred, four hydrogen ions are translocated across the cytoplasmic membrane), and thus conserves the redox energy in a proton gradient. This chain is NADH-quinone oxidoreductase subunit K, found in Francisella tularensis subsp. holarctica (strain FTNF002-00 / FTA).